Here is a 371-residue protein sequence, read N- to C-terminus: Putative 26S proteasome regulatory subunit homolog MJ1494 (371 aa).

Gly-161–Thr-168 is an ATP binding site.

This sequence belongs to the AAA ATPase family.

Functionally, the 26S proteasome is involved in the ATP-dependent degradation of ubiquitinated proteins. The regulatory (or ATPase) complex confers ATP dependency and substrate specificity to the 26S complex. This chain is Putative 26S proteasome regulatory subunit homolog MJ1494, found in Methanocaldococcus jannaschii (strain ATCC 43067 / DSM 2661 / JAL-1 / JCM 10045 / NBRC 100440) (Methanococcus jannaschii).